Reading from the N-terminus, the 447-residue chain is Glutamate--tRNA ligase 1 (447 aa).

The 'HIGH' region motif lies at 10-20 (PSPTGMLHVGN). Positions 240–244 (KISKR) match the 'KMSKS' region motif. Residue Lys243 coordinates ATP.

It belongs to the class-I aminoacyl-tRNA synthetase family. Glutamate--tRNA ligase type 1 subfamily. In terms of assembly, monomer.

It is found in the cytoplasm. The catalysed reaction is tRNA(Glu) + L-glutamate + ATP = L-glutamyl-tRNA(Glu) + AMP + diphosphate. Functionally, catalyzes the attachment of glutamate to tRNA(Glu) in a two-step reaction: glutamate is first activated by ATP to form Glu-AMP and then transferred to the acceptor end of tRNA(Glu). This chain is Glutamate--tRNA ligase 1, found in Rickettsia prowazekii (strain Madrid E).